A 320-amino-acid chain; its full sequence is GPI-specific phospholipase A2-like PGAP3 (320 aa).

The signal sequence occupies residues 1 to 23 (MAKRTAPLLLLTLAVGLAGGSQG). At 24-98 (DREPVYRDCV…QFHGKWPFSR (75 aa)) the chain is on the lumenal side. N40 carries N-linked (GlcNAc...) asparagine glycosylation. Residues 99–119 (FLFIQEPASAVASLLNGLASL) form a helical membrane-spanning segment. Over 120 to 135 (VMLCRYRASVPASSPM) the chain is Cytoplasmic. The chain crosses the membrane as a helical span at residues 136-156 (YHTCMAFAWVSLNAWFWSTVF). Over 157-169 (HTRDTDLTEKMDY) the chain is Lumenal. Residues 170–190 (FCASAVILHSVYLCCVRTVGL) traverse the membrane as a helical segment. At 191-198 (QHPSVASA) the chain is on the cytoplasmic side. A helical membrane pass occupies residues 199–219 (FGALLLLLLTGHISYLSLVHF). At 220–223 (DYGY) the chain is on the lumenal side. The helical transmembrane segment at 224–244 (NMMANVAIGLVNLAWWLVWCL) threads the bilayer. Residues 245–257 (RNRQRLPHTRRCM) lie on the Cytoplasmic side of the membrane. A helical membrane pass occupies residues 258–278 (VVVVLLQGLSLLELLDFPPLF). Residue W279 is a topological domain, lumenal. The chain crosses the membrane as a helical span at residues 280–299 (VLDAHAIWHISTIPVHTLFF). The Cytoplasmic portion of the chain corresponds to 300–320 (RFLEDDSLYLLKESGAMFKLD).

It belongs to the PGAP3 family.

It is found in the golgi apparatus membrane. Its function is as follows. Involved in the fatty acid remodeling steps of GPI-anchor maturation where the unsaturated acyl chain at sn-2 of inositol phosphate is replaced by a saturated stearoyl chain. May catalyze the first step of the fatty acid remodeling, by removing the unsaturated acyl chain at sn-2 of inositol phosphate, generating a lyso-GPI intermediate. The fatty acid remodeling steps is critical for the integration of GPI-APs into lipid rafts. The protein is GPI-specific phospholipase A2-like PGAP3 of Mus musculus (Mouse).